Here is a 145-residue protein sequence, read N- to C-terminus: 3-hydroxyacyl-[acyl-carrier-protein] dehydratase FabZ (145 aa).

His49 is an active-site residue.

The protein belongs to the thioester dehydratase family. FabZ subfamily.

It localises to the cytoplasm. The enzyme catalyses a (3R)-hydroxyacyl-[ACP] = a (2E)-enoyl-[ACP] + H2O. In terms of biological role, involved in unsaturated fatty acids biosynthesis. Catalyzes the dehydration of short chain beta-hydroxyacyl-ACPs and long chain saturated and unsaturated beta-hydroxyacyl-ACPs. In Rickettsia bellii (strain RML369-C), this protein is 3-hydroxyacyl-[acyl-carrier-protein] dehydratase FabZ.